The chain runs to 127 residues: Small ribosomal subunit protein uS13 (127 aa).

The segment at 93–127 (RQGLPVRGQRTRTNGRTRRGRRVTVAGKKKAPAKK) is disordered. The span at 101-127 (QRTRTNGRTRRGRRVTVAGKKKAPAKK) shows a compositional bias: basic residues.

The protein belongs to the universal ribosomal protein uS13 family. As to quaternary structure, part of the 30S ribosomal subunit. Forms a loose heterodimer with protein S19. Forms two bridges to the 50S subunit in the 70S ribosome.

Located at the top of the head of the 30S subunit, it contacts several helices of the 16S rRNA. In the 70S ribosome it contacts the 23S rRNA (bridge B1a) and protein L5 of the 50S subunit (bridge B1b), connecting the 2 subunits; these bridges are implicated in subunit movement. Contacts the tRNAs in the A and P-sites. The polypeptide is Small ribosomal subunit protein uS13 (Crocosphaera subtropica (strain ATCC 51142 / BH68) (Cyanothece sp. (strain ATCC 51142))).